Here is a 159-residue protein sequence, read N- to C-terminus: Transcription elongation factor GreA (159 aa).

Residues 47-77 (SENAEYDAARDKQATIENEITEIQHILDNYE) adopt a coiled-coil conformation.

It belongs to the GreA/GreB family.

Its function is as follows. Necessary for efficient RNA polymerase transcription elongation past template-encoded arresting sites. The arresting sites in DNA have the property of trapping a certain fraction of elongating RNA polymerases that pass through, resulting in locked ternary complexes. Cleavage of the nascent transcript by cleavage factors such as GreA or GreB allows the resumption of elongation from the new 3'terminus. GreA releases sequences of 2 to 3 nucleotides. This is Transcription elongation factor GreA from Metamycoplasma arthritidis (strain 158L3-1) (Mycoplasma arthritidis).